A 129-amino-acid polypeptide reads, in one-letter code: NADH-quinone oxidoreductase subunit A (129 aa).

Transmembrane regions (helical) follow at residues 14–34 (LAIH…VAAV), 67–87 (FLIA…FAWA), and 97–117 (GLIE…YLWI).

This sequence belongs to the complex I subunit 3 family. NDH-1 is composed of 14 different subunits. Subunits NuoA, H, J, K, L, M, N constitute the membrane sector of the complex.

The protein resides in the cell inner membrane. The catalysed reaction is a quinone + NADH + 5 H(+)(in) = a quinol + NAD(+) + 4 H(+)(out). NDH-1 shuttles electrons from NADH, via FMN and iron-sulfur (Fe-S) centers, to quinones in the respiratory chain. The immediate electron acceptor for the enzyme in this species is believed to be ubiquinone. Couples the redox reaction to proton translocation (for every two electrons transferred, four hydrogen ions are translocated across the cytoplasmic membrane), and thus conserves the redox energy in a proton gradient. The chain is NADH-quinone oxidoreductase subunit A from Rhodopseudomonas palustris (strain BisB18).